The chain runs to 230 residues: UPF0173 metal-dependent hydrolase Mbar_A3716 (230 aa).

It belongs to the UPF0173 family.

In Methanosarcina barkeri (strain Fusaro / DSM 804), this protein is UPF0173 metal-dependent hydrolase Mbar_A3716.